Consider the following 564-residue polypeptide: Nucleoprotein (564 aa).

A binding site for the cap structure m7GTP region spans residues 54–236 (LRKTKRGEED…VTKDESSINI (183 aa)). Mn(2+) is bound by residues D380 and E382. Residues E390, C497, H500, and C525 each contribute to the Zn(2+) site. D529 is a Mn(2+) binding site.

Belongs to the arenaviridae nucleocapsid protein family. As to quaternary structure, homomultimerizes to form the nucleocapsid. Binds to viral genomic RNA. Interacts with glycoprotein G2. Interacts with protein Z; this interaction probably directs the encapsidated genome to budding sites. Interacts with protein L; this interaction does not interfere with Z-L interaction. Interacts with host IKBKE (via Protein kinase domain); the interaction inhibits IKBKE kinase activity.

Its subcellular location is the virion. The protein localises to the host cytoplasm. Its function is as follows. Encapsidates the genome, protecting it from nucleases. The encapsidated genomic RNA is termed the nucleocapsid (NC). Serves as template for viral transcription and replication. The increased presence of protein N in host cell does not seem to trigger the switch from transcription to replication as observed in other negative strain RNA viruses. Through the interaction with host IKBKE, strongly inhibits the phosphorylation and nuclear translocation of host IRF3, a protein involved in interferon activation pathway, leading to the inhibition of interferon-beta and IRF3-dependent promoters activation. Also encodes a functional 3'-5' exoribonuclease that degrades preferentially dsRNA substrates and thereby participates in the suppression of interferon induction. The sequence is that of Nucleoprotein from Akodon azarae (Azara's grass mouse).